A 65-amino-acid polypeptide reads, in one-letter code: Small, acid-soluble spore protein H 1 (65 aa).

The protein belongs to the SspH family.

The protein localises to the spore core. The sequence is that of Small, acid-soluble spore protein H 1 from Clostridium botulinum (strain Langeland / NCTC 10281 / Type F).